Reading from the N-terminus, the 306-residue chain is Glutaminase (306 aa).

7 residues coordinate substrate: Ser-64, Asn-115, Glu-159, Asn-166, Tyr-190, Tyr-242, and Val-260.

It belongs to the glutaminase family. As to quaternary structure, homotetramer.

It catalyses the reaction L-glutamine + H2O = L-glutamate + NH4(+). This Vibrio atlanticus (strain LGP32) (Vibrio splendidus (strain Mel32)) protein is Glutaminase.